The chain runs to 613 residues: Proteasome-associated ATPase (613 aa).

The interval 1-29 (MSESERSEGFPEGFAGAGSGSLSSEDAAE) is disordered. The stretch at 23–100 (SSEDAAELEA…LREEVDRLGQ (78 aa)) forms a coiled coil. 300 to 305 (GCGKTL) is a binding site for ATP. Lysine 595 is covalently cross-linked (Isoglutamyl lysine isopeptide (Lys-Gln) (interchain with Q-Cter in protein Pup)). Positions 612-613 (YL) are docks into pockets in the proteasome alpha-ring.

It belongs to the AAA ATPase family. In terms of assembly, homohexamer. Assembles into a hexameric ring structure that caps the 20S proteasome core. Strongly interacts with the prokaryotic ubiquitin-like protein Pup through a hydrophobic interface; the interacting region of ARC lies in its N-terminal coiled-coil domain. There is one Pup binding site per ARC hexamer ring. Upon ATP-binding, the C-terminus of ARC interacts with the alpha-rings of the proteasome core, possibly by binding to the intersubunit pockets.

It functions in the pathway protein degradation; proteasomal Pup-dependent pathway. Functionally, ATPase which is responsible for recognizing, binding, unfolding and translocation of pupylated proteins into the bacterial 20S proteasome core particle. May be essential for opening the gate of the 20S proteasome via an interaction with its C-terminus, thereby allowing substrate entry and access to the site of proteolysis. Thus, the C-termini of the proteasomal ATPase may function like a 'key in a lock' to induce gate opening and therefore regulate proteolysis. In Mycolicibacterium smegmatis (strain ATCC 700084 / mc(2)155) (Mycobacterium smegmatis), this protein is Proteasome-associated ATPase.